A 453-amino-acid polypeptide reads, in one-letter code: Choline kinase alpha (453 aa).

The interval 22–81 is disordered; the sequence is CGGSAAPTPGVGQQRDAAGELESKQLGGRSQPLALPPPPPPPLPLPPPPSPPLADEQPEP. The span at 55–73 shows a compositional bias: pro residues; that stretch reads ALPPPPPPPLPLPPPPSPP. A Phosphoserine modification is found at serine 71. Residues 113–119, arginine 142, and 203–209 each bind ATP; these read RGGLSNM and QFIPSRR. 115-117 is a phosphocholine binding site; the sequence is GLS. Lysine 243 bears the N6-acetyllysine mark. Serine 275 is subject to Phosphoserine. ATP is bound by residues glutamine 304 and aspartate 326.

It belongs to the choline/ethanolamine kinase family. As to quaternary structure, heterodimer with CHKB. Homodimer. Monomer; acetylation by KAT5 promotes dissociation of the homodimer and monomerization. In terms of processing, phosphorylated at Ser-275 by AMPK in response to glucose deprivation, leading to localization to lipid droplets. Acetylated by KAT5 at Lys-243 following phosphorylation by AMPK, leading to monomerization and conversion into a tyrosine-protein kinase. As to expression, testis, brain, lung, kidney and liver.

It is found in the cytoplasm. The protein resides in the cytosol. Its subcellular location is the lipid droplet. It carries out the reaction choline + ATP = phosphocholine + ADP + H(+). It catalyses the reaction ethanolamine + ATP = phosphoethanolamine + ADP + H(+). The catalysed reaction is L-tyrosyl-[protein] + ATP = O-phospho-L-tyrosyl-[protein] + ADP + H(+). It functions in the pathway phospholipid metabolism; phosphatidylcholine biosynthesis; phosphocholine from choline: step 1/1. Its pathway is phospholipid metabolism; phosphatidylethanolamine biosynthesis; phosphatidylethanolamine from ethanolamine: step 1/3. Functionally, plays a key role in phospholipid biosynthesis by catalyzing the phosphorylation of free choline to phosphocholine, the first step in phosphatidylcholine biosynthesis. Also phosphorylates ethanolamine, thereby contributing to phosphatidylethanolamine biosynthesis. Has higher activity with choline. In terms of biological role, this isoform plays a key role in lipolysis of lipid droplets following glucose deprivation. In response to glucose deprivation, phosphorylated by AMPK, promoting localization to lipid droplets. Phosphorylation is followed by acetylation by KAT5, leading to dissociation of the homodimer into a monomer. Monomeric CHKA isoform 1 is converted into a tyrosine-protein kinase, which phosphorylates lipid droplet structural proteins PLIN2 and PLIN3, leading to lipolysis of lipid droplets. This Rattus norvegicus (Rat) protein is Choline kinase alpha (Chka).